Reading from the N-terminus, the 426-residue chain is Dihydroorotase (426 aa).

The Zn(2+) site is built by His-58 and His-60. Residues His-60–Arg-62 and Asn-92 contribute to the substrate site. The Zn(2+) site is built by Asp-150, His-177, and His-230. Asn-276 contributes to the substrate binding site. Residue Asp-303 coordinates Zn(2+). Asp-303 is a catalytic residue. Substrate is bound by residues His-307 and Phe-321–Gly-322.

This sequence belongs to the metallo-dependent hydrolases superfamily. DHOase family. Class I DHOase subfamily. Requires Zn(2+) as cofactor.

The enzyme catalyses (S)-dihydroorotate + H2O = N-carbamoyl-L-aspartate + H(+). The protein operates within pyrimidine metabolism; UMP biosynthesis via de novo pathway; (S)-dihydroorotate from bicarbonate: step 3/3. Catalyzes the reversible cyclization of carbamoyl aspartate to dihydroorotate. The chain is Dihydroorotase from Listeria monocytogenes serovar 1/2a (strain ATCC BAA-679 / EGD-e).